The chain runs to 590 residues: UvrABC system protein C (590 aa).

Residues 11–85 (ETPGVYLWKR…IKAHRPLYNV (75 aa)) form the GIY-YIG domain. One can recognise a UVR domain in the interval 194-229 (DGLLQELEAKMREAARRLEFERAAEIRDQMEALRAF).

This sequence belongs to the UvrC family. As to quaternary structure, interacts with UvrB in an incision complex.

The protein localises to the cytoplasm. Its function is as follows. The UvrABC repair system catalyzes the recognition and processing of DNA lesions. UvrC both incises the 5' and 3' sides of the lesion. The N-terminal half is responsible for the 3' incision and the C-terminal half is responsible for the 5' incision. The polypeptide is UvrABC system protein C (Thermus thermophilus (strain ATCC 27634 / DSM 579 / HB8)).